The following is an 879-amino-acid chain: MKYLTSAQVRQMFLDFFKEKGHDVEPSASLVPHDDPSLLWINSGVATLKKYFDGRVIPENPRITNAQKSIRTNDIENVGKTARHHTFFEMLGNFSIGDYFKEEAIEWAWEFLTSEKWIGFDKEKLSVTVHPEDDEAYSYWKEKIGIPEERIIRLEGNFWDIGEGPSGPNTEIFYDRGPEYGDQPNDPELYPGGENDRYLEVWNLVFSQFNHNPDGSYTPLPKKNIDTGMGLERMVSVIQNVPTNFETDLFMPIIRATEKISGTEYGSHHEADVSFKVIADHIRTVTFAIGDGALPSNEGRGYVLRRLLRRAVRYAKQIGIDRPFMYELVPVVGDIMVDFYPEVKEKAAFIQKVVKTEEERFHETLNEGLSILEKVIDKAKSEGASTISGSDVFRLYDTYGFPVDLTEEYVEEQGLQVDLDGFEAEMERQRERARTARQQAGSMQVQDEVLGQITVDSTFIGYKQLSTETTIETIVLDKTVADYVGAGQEAKVILKETPFYAESGGQVADKGIIRGANGFAVVSDVQKAPNGQHLHTVIVKEGTLQVNDQVQAIVEETERSGIVKNHTATHLLHRALKDVLGEHVNQAGSLVSEERLRFDFSHFGQVTDEEKEKIERIVNEKIWQAIKVNISTKTLDEAKAIGAMALFGEKYGDIVRVVEVGDYSIELCGGCHVTNTSEIGLFKIVSESGIGAGVRRIEAVTGKEAFLFMAKQLDLLKETAATVKAKNVKDVPVRVEALQQQIRELQRENESLNAKLGNMEAGSLVNEVQKIEGVPVLAKAISGADMDGLRSIVDKLKQEIPSVVIVLGTASEGKVNIVAGVTKDLINKGYHAGKLVKEVATRCGGGGGGRPDMAQAGGKQPEKLQDALSFVYEYVKSIS.

Zn(2+) contacts are provided by histidine 566, histidine 570, cysteine 668, and histidine 672.

The protein belongs to the class-II aminoacyl-tRNA synthetase family. It depends on Zn(2+) as a cofactor.

The protein localises to the cytoplasm. It carries out the reaction tRNA(Ala) + L-alanine + ATP = L-alanyl-tRNA(Ala) + AMP + diphosphate. In terms of biological role, catalyzes the attachment of alanine to tRNA(Ala) in a two-step reaction: alanine is first activated by ATP to form Ala-AMP and then transferred to the acceptor end of tRNA(Ala). Also edits incorrectly charged Ser-tRNA(Ala) and Gly-tRNA(Ala) via its editing domain. The chain is Alanine--tRNA ligase from Halalkalibacterium halodurans (strain ATCC BAA-125 / DSM 18197 / FERM 7344 / JCM 9153 / C-125) (Bacillus halodurans).